Here is a 460-residue protein sequence, read N- to C-terminus: MTTSHQPQDRYKAVWLIFFVLGLGTLLPWNFFMTATKYFTNRLDVSQNVSSDTDQSCESTKALADPTVALPARSSLSAIFNNVMTLCAMLPLLVFTCLNSFLHQRISQSVRILGSLLAILLVFLVTAALVKVEMDALIFFVITMIKIVLINSFGAILQASLFGLAGVLPANYTAPIMSGQGLAGFFTSVAMICAIASGSELSESAFGYFITACAVVILAILCYLALPRTEFYRHYLQLNLAGPAEQETKLDLISKGEEPKGRREESGVPGPNSPPTNRNQSIKAILKSICVPALSVCFIFTVTIGLFPAVTAEVESSIAGTSPWKSYFIPVACFLNFNVFDWLGRSLTAVCMWPGQDSRWLPVLVASRIVFIPLLMLCNVKARHCGAQRHHFVFKHDAWFIAFMAAFAFSNGYLASLCMCFGPKKVKPAEAETAGNIMSFFLCLGLALGAVLSFLLRALV.

The Cytoplasmic portion of the chain corresponds to 1 to 12 (MTTSHQPQDRYK). Residues 13–29 (AVWLIFFVLGLGTLLPW) traverse the membrane as a helical segment. Topologically, residues 30–82 (NFFMTATKYFTNRLDVSQNVSSDTDQSCESTKALADPTVALPARSSLSAIFNN) are extracellular. A glycan (N-linked (GlcNAc...) asparagine) is linked at N48. A helical membrane pass occupies residues 83–107 (VMTLCAMLPLLVFTCLNSFLHQRIS). Over 108-111 (QSVR) the chain is Cytoplasmic. A helical transmembrane segment spans residues 112 to 130 (ILGSLLAILLVFLVTAALV). At 131 to 138 (KVEMDALI) the chain is on the extracellular side. Residues 139-157 (FFVITMIKIVLINSFGAIL) traverse the membrane as a helical segment. Topologically, residues 158–174 (QASLFGLAGVLPANYTA) are cytoplasmic. A helical membrane pass occupies residues 175-199 (PIMSGQGLAGFFTSVAMICAIASGS). At 200 to 206 (ELSESAF) the chain is on the extracellular side. Residues 207-227 (GYFITACAVVILAILCYLALP) traverse the membrane as a helical segment. The Cytoplasmic portion of the chain corresponds to 228 to 291 (RTEFYRHYLQ…IKAILKSICV (64 aa)). S254 carries the post-translational modification Phosphoserine. The segment covering 255-266 (KGEEPKGRREES) has biased composition (basic and acidic residues). The segment at 255–277 (KGEEPKGRREESGVPGPNSPPTN) is disordered. S273 is modified (phosphoserine). Residues 292–311 (PALSVCFIFTVTIGLFPAVT) traverse the membrane as a helical segment. The Extracellular segment spans residues 312–323 (AEVESSIAGTSP). Residues 324 to 342 (WKSYFIPVACFLNFNVFDW) form a helical membrane-spanning segment. The Cytoplasmic portion of the chain corresponds to 343 to 359 (LGRSLTAVCMWPGQDSR). A helical membrane pass occupies residues 360 to 378 (WLPVLVASRIVFIPLLMLC). Residues 379–397 (NVKARHCGAQRHHFVFKHD) are Extracellular-facing. The helical transmembrane segment at 398–417 (AWFIAFMAAFAFSNGYLASL) threads the bilayer. Residues 418–435 (CMCFGPKKVKPAEAETAG) lie on the Cytoplasmic side of the membrane. Residues 436–456 (NIMSFFLCLGLALGAVLSFLL) traverse the membrane as a helical segment. Residues 457–460 (RALV) lie on the Extracellular side of the membrane.

The protein belongs to the SLC29A/ENT transporter (TC 2.A.57) family. In terms of assembly, identified in a complex with STOM. Post-translationally, glycosylated. As to expression, highly expressed in heart, spleen, lung, liver and testis. Lower level of expression in brain and kidney. Expressed in adipose tissues, brown adipocytes expressing significantly higher amounts than white adipocytes. Expressed in seminiferous tubules.

The protein resides in the basolateral cell membrane. It is found in the apical cell membrane. It localises to the cell membrane. It catalyses the reaction adenosine(in) = adenosine(out). The catalysed reaction is guanosine(in) = guanosine(out). The enzyme catalyses inosine(in) = inosine(out). It carries out the reaction uridine(out) = uridine(in). It catalyses the reaction thymidine(in) = thymidine(out). The catalysed reaction is cytidine(in) = cytidine(out). The enzyme catalyses adenine(out) = adenine(in). It carries out the reaction guanine(out) = guanine(in). It catalyses the reaction thymine(out) = thymine(in). The catalysed reaction is uracil(in) = uracil(out). The enzyme catalyses hypoxanthine(out) = hypoxanthine(in). Its activity is regulated as follows. Transporter activity is sensitive to low concentrations of the inhibitor nitrobenzylmercaptopurine riboside (NBMPR). Its function is as follows. Uniporter involved in the facilitative transport of nucleosides and nucleobases, and contributes to maintaining their cellular homeostasis. Functions as a Na(+)-independent transporter. Involved in the transport of nucleosides such as adenosine, guanosine, inosine, uridine, thymidine and cytidine. Also transports purine (hypoxanthine, adenine, guanine) and pyrimidine nucleobases (thymine, uracil). Mediates basolateral nucleoside uptake into Sertoli cells, thereby regulating the transport of nucleosides in testis across the blood-testis-barrier. Regulates inosine levels in brown adipocytes tissues (BAT) and extracellular inosine levels, which controls BAT-dependent energy expenditure. This Mus musculus (Mouse) protein is Equilibrative nucleoside transporter 1.